A 195-amino-acid polypeptide reads, in one-letter code: Granulocyte colony-stimulating factor (195 aa).

Positions 1 to 21 are cleaved as a signal peptide; that stretch reads MKLMALQLLLWHIALWMVPEA. 2 disulfides stabilise this stretch: Cys-57/Cys-63 and Cys-85/Cys-95. O-linked (GalNAc...) threonine glycosylation occurs at Thr-154.

This sequence belongs to the IL-6 superfamily. In terms of assembly, monomer. In terms of processing, O-glycosylated.

It is found in the secreted. Its function is as follows. Granulocyte/macrophage colony-stimulating factors are cytokines that act in hematopoiesis by controlling the production, differentiation, and function of 2 related white cell populations of the blood, the granulocytes and the monocytes-macrophages. This CSF induces granulocytes. The protein is Granulocyte colony-stimulating factor (CSF3) of Sus scrofa (Pig).